Reading from the N-terminus, the 294-residue chain is Elongation factor Ts (294 aa).

The tract at residues 79–82 is involved in Mg(2+) ion dislocation from EF-Tu; that stretch reads TDFV.

This sequence belongs to the EF-Ts family.

It is found in the cytoplasm. Associates with the EF-Tu.GDP complex and induces the exchange of GDP to GTP. It remains bound to the aminoacyl-tRNA.EF-Tu.GTP complex up to the GTP hydrolysis stage on the ribosome. The polypeptide is Elongation factor Ts (Oceanobacillus iheyensis (strain DSM 14371 / CIP 107618 / JCM 11309 / KCTC 3954 / HTE831)).